Here is a 69-residue protein sequence, read N- to C-terminus: Ribosome modulation factor (69 aa).

The protein belongs to the ribosome modulation factor family.

The protein resides in the cytoplasm. During stationary phase, converts 70S ribosomes to an inactive dimeric form (100S ribosomes). The sequence is that of Ribosome modulation factor from Chromohalobacter salexigens (strain ATCC BAA-138 / DSM 3043 / CIP 106854 / NCIMB 13768 / 1H11).